The following is a 336-amino-acid chain: tRNA-modifying protein YgfZ (336 aa).

Residues W28 and W191 each coordinate folate.

Belongs to the tRNA-modifying YgfZ family.

Its subcellular location is the cytoplasm. Its function is as follows. Folate-binding protein involved in regulating the level of ATP-DnaA and in the modification of some tRNAs. It is probably a key factor in regulatory networks that act via tRNA modification, such as initiation of chromosomal replication. The chain is tRNA-modifying protein YgfZ from Hamiltonella defensa subsp. Acyrthosiphon pisum (strain 5AT).